A 436-amino-acid polypeptide reads, in one-letter code: GTPase Der (436 aa).

EngA-type G domains follow at residues 4-167 (PVVA…PKEE) and 176-351 (VKFS…DNHS). GTP-binding positions include 10–17 (GRPNVGKS), 57–61 (DTGGI), 119–122 (NKVD), 182–189 (GRPNVGKS), 229–233 (DTAGM), and 294–297 (NKWD). Positions 352-436 (LRVQSSMLND…PIRVIARKRK (85 aa)) constitute a KH-like domain.

Belongs to the TRAFAC class TrmE-Era-EngA-EngB-Septin-like GTPase superfamily. EngA (Der) GTPase family. As to quaternary structure, associates with the 50S ribosomal subunit.

Functionally, GTPase that plays an essential role in the late steps of ribosome biogenesis. In Listeria innocua serovar 6a (strain ATCC BAA-680 / CLIP 11262), this protein is GTPase Der.